Consider the following 152-residue polypeptide: MKTPIELKILDSRIGSEFPLPAYATPGSAGMDLRAMIDTTLTIAPGETVLIPTGIAIHVADPGLAAVILPRSGLGHKHGIVLGNLVGLIDSDYQGPLMVSCWNRSDSPFALEIGDRLAQLVFVPVVQAQFKLVDEFDSSDRGEGGFGHSGTK.

Substrate contacts are provided by residues 71 to 73 (RSG), asparagine 84, 88 to 90 (LID), and methionine 98.

The protein belongs to the dUTPase family. Mg(2+) is required as a cofactor.

The enzyme catalyses dUTP + H2O = dUMP + diphosphate + H(+). It functions in the pathway pyrimidine metabolism; dUMP biosynthesis; dUMP from dCTP (dUTP route): step 2/2. In terms of biological role, this enzyme is involved in nucleotide metabolism: it produces dUMP, the immediate precursor of thymidine nucleotides and it decreases the intracellular concentration of dUTP so that uracil cannot be incorporated into DNA. This is Deoxyuridine 5'-triphosphate nucleotidohydrolase from Shewanella baltica (strain OS185).